We begin with the raw amino-acid sequence, 215 residues long: Ribonuclease T (215 aa).

Residues 20-194 form the Exonuclease domain; that stretch reads VVIDVETAGF…YDTERTAVLF (175 aa). The Mg(2+) site is built by Asp-23, Glu-25, His-181, and Asp-186. The active-site Proton donor/acceptor is the His-181.

It belongs to the RNase T family. As to quaternary structure, homodimer. It depends on Mg(2+) as a cofactor.

Trims short 3' overhangs of a variety of RNA species, leaving a one or two nucleotide 3' overhang. Responsible for the end-turnover of tRNA: specifically removes the terminal AMP residue from uncharged tRNA (tRNA-C-C-A). Also appears to be involved in tRNA biosynthesis. The sequence is that of Ribonuclease T from Shigella boydii serotype 4 (strain Sb227).